Here is a 379-residue protein sequence, read N- to C-terminus: MRLHAPILSLLAAAASTSAAGVTGSAEGFAKGVTGGGSATPVYPSTTAELVSYLGDSSARVIVLTKTFDFTGTEGTTTETGCAPWGTASACQVAINKNDWCTNYQPNAPSVSVTYDNAGVLGITVKSNKSLVGEGSSGVIKGKGLRIVSGASNVIIQNIAITDLNPKYVWGGDAITLDNADMVWIDHVTTARIGRQHLVLGTSASNRVTVSNSYFNGVTSYSATCDGYHYWGIYLTGSNDMVTLKGNYIYHMSGRSPKVGGNTLLHAVNNYWYDSSGHAFEIDSGGYVLAEGNVFQNIPTVIEGTVGGQLFTSPDSSTNAICSTYLGHTCQVNGFGSSGTFKQADTAFLVNFQGKNIASASAYTVAQSSVPSNAGQGKL.

Residues 1 to 19 (MRLHAPILSLLAAAASTSA) form the signal peptide. 2 cysteine pairs are disulfide-bonded: Cys82/Cys101 and Cys91/Cys225. Asn128 carries an N-linked (GlcNAc...) asparagine glycan. Residue Arg255 is part of the active site. The cysteines at positions 322 and 330 are disulfide-linked.

This sequence belongs to the polysaccharide lyase 1 family.

Its subcellular location is the secreted. It catalyses the reaction Eliminative cleavage of (1-&gt;4)-alpha-D-galacturonan methyl ester to give oligosaccharides with 4-deoxy-6-O-methyl-alpha-D-galact-4-enuronosyl groups at their non-reducing ends.. Functionally, pectinolytic enzymes consist of four classes of enzymes: pectin lyase, polygalacturonase, pectin methylesterase and rhamnogalacturonase. Among pectinolytic enzymes, pectin lyase is the most important in depolymerization of pectin, since it cleaves internal glycosidic bonds of highly methylated pectins. This Emericella nidulans (strain FGSC A4 / ATCC 38163 / CBS 112.46 / NRRL 194 / M139) (Aspergillus nidulans) protein is Pectin lyase B (pelB).